A 141-amino-acid polypeptide reads, in one-letter code: HTH-type transcriptional repressor NsrR (141 aa).

Residues 2–129 enclose the HTH rrf2-type domain; that stretch reads QLTSFTDYGL…DNYTLADMVQ (128 aa). Residues 28–51 constitute a DNA-binding region (H-T-H motif); the sequence is ISQVTEVYGVSRNHMVKIINQLSR. [2Fe-2S] cluster-binding residues include cysteine 91, cysteine 96, and cysteine 102.

The cofactor is [2Fe-2S] cluster.

Functionally, nitric oxide-sensitive repressor of genes involved in protecting the cell against nitrosative stress. May require iron for activity. In Yersinia enterocolitica serotype O:8 / biotype 1B (strain NCTC 13174 / 8081), this protein is HTH-type transcriptional repressor NsrR.